A 338-amino-acid polypeptide reads, in one-letter code: RNA 3'-terminal phosphate cyclase (338 aa).

Residues Gln-103 and 283–287 (YLADQ) contribute to the ATP site. His-308 acts as the Tele-AMP-histidine intermediate in catalysis.

The protein belongs to the RNA 3'-terminal cyclase family. Type 1 subfamily.

It localises to the cytoplasm. It catalyses the reaction a 3'-end 3'-phospho-ribonucleotide-RNA + ATP = a 3'-end 2',3'-cyclophospho-ribonucleotide-RNA + AMP + diphosphate. In terms of biological role, catalyzes the conversion of 3'-phosphate to a 2',3'-cyclic phosphodiester at the end of RNA. The mechanism of action of the enzyme occurs in 3 steps: (A) adenylation of the enzyme by ATP; (B) transfer of adenylate to an RNA-N3'P to produce RNA-N3'PP5'A; (C) and attack of the adjacent 2'-hydroxyl on the 3'-phosphorus in the diester linkage to produce the cyclic end product. The biological role of this enzyme is unknown but it is likely to function in some aspects of cellular RNA processing. In Escherichia coli O8 (strain IAI1), this protein is RNA 3'-terminal phosphate cyclase.